Reading from the N-terminus, the 449-residue chain is Elongation factor 1-alpha (449 aa).

In terms of domain architecture, tr-type G spans 5-230 (KVHMNLVVVG…DMLEPPVRPS (226 aa)). Residues 14–21 (GHVDAGKS) are G1. 14–21 (GHVDAGKS) lines the GTP pocket. The segment at 70-74 (GITID) is G2. The G3 stretch occupies residues 91 to 94 (DAPG). Residues 91-95 (DAPGH) and 153-156 (NKMD) contribute to the GTP site. The interval 153–156 (NKMD) is G4. Positions 194–196 (SGW) are G5. E362 carries the 5-glutamyl glycerylphosphorylethanolamine modification.

It belongs to the TRAFAC class translation factor GTPase superfamily. Classic translation factor GTPase family. EF-Tu/EF-1A subfamily. Phosphatidylethanolamine (PE) is a direct precursor of the ethanolamine-phosphoglycerol (EPG) moiety.

It localises to the cytoplasm. In terms of biological role, this protein promotes the GTP-dependent binding of aminoacyl-tRNA to the A-site of ribosomes during protein biosynthesis. This is Elongation factor 1-alpha (TEF1) from Trypanosoma brucei brucei.